We begin with the raw amino-acid sequence, 355 residues long: Putative inositol monophosphatase 3 (355 aa).

Residues 16 to 36 (LPATIVAILLTFVLVYFLNFH) form a helical membrane-spanning segment. Glu127, Asp167, Leu169, Asp170, and Asp292 together coordinate Mg(2+). Glu127 provides a ligand contact to substrate. Residues 169 to 172 (LDAT) and Asp292 contribute to the substrate site.

Belongs to the inositol monophosphatase superfamily. The cofactor is Mg(2+).

The protein localises to the membrane. It catalyses the reaction a myo-inositol phosphate + H2O = myo-inositol + phosphate. The protein operates within polyol metabolism; myo-inositol biosynthesis; myo-inositol from D-glucose 6-phosphate: step 2/2. This chain is Putative inositol monophosphatase 3, found in Drosophila melanogaster (Fruit fly).